Consider the following 346-residue polypeptide: Galactitol 1-phosphate 5-dehydrogenase (346 aa).

Cysteine 38, histidine 59, cysteine 89, cysteine 92, cysteine 95, cysteine 103, and glutamate 144 together coordinate Zn(2+).

This sequence belongs to the zinc-containing alcohol dehydrogenase family. The cofactor is Zn(2+).

The enzyme catalyses galactitol 1-phosphate + NAD(+) = keto-D-tagatose 6-phosphate + NADH + H(+). Functionally, converts galactitol 1-phosphate to tagatose 6-phosphate. The chain is Galactitol 1-phosphate 5-dehydrogenase (gatD) from Escherichia coli O157:H7.